The following is a 191-amino-acid chain: MAILAKAVGRRKEAVAQVQIKEGNGLFIINNKSAQEYLHNDFYSLLAVKAPFDVLSTSKKADMVSPDLSLTNLESTFTNLMQFSGGENAVKFDTIVKVKGGGLMGQTEAIRLGISRALCLLSTNTNPSANQNNLPNIYIPEGEGEALAIPNASDIRKQLKDKGYLTQDSRVKERRKYGLKKARKASQYHKR.

Residues 166-191 form a disordered region; sequence TQDSRVKERRKYGLKKARKASQYHKR. A compositionally biased stretch (basic residues) spans 172-191; it reads KERRKYGLKKARKASQYHKR.

This sequence belongs to the universal ribosomal protein uS9 family.

The protein resides in the plastid. The protein localises to the chloroplast. The polypeptide is Small ribosomal subunit protein uS9c (rps9) (Chlamydomonas reinhardtii (Chlamydomonas smithii)).